The following is a 59-amino-acid chain: UPF0434 protein VV1_2087 (59 aa).

It belongs to the UPF0434 family.

This chain is UPF0434 protein VV1_2087, found in Vibrio vulnificus (strain CMCP6).